The chain runs to 318 residues: MEHCTFNLPDVQASKPSIAINLTRVGVTNMKKLVEIKRKDKRPIVLISTFDVFVDLPSDRKGANLSRNFEAVDEVLEKVLSTPVYEIEQLCSDIAHNLLGRHEYANQAEVRMKSEYMIRRASPSTGIKCQEVVNIFAEASAVRGVGDKDYFDVKKLIGAEVVGMTACPCAQEIMRDKAANELAELGVDRDTIIRFLEKVPMATHNQRGRGIISIKVAHDFDVSLESIIRIIERSMSSSVYEVLKRSDEKVVVETAHMNPKFVEDCVRAMADNIVKEFPNLPDNAVITIKQINEESIHRHNAFAERVALMGELRSEINQ.

The protein belongs to the GTP cyclohydrolase IV family. In terms of assembly, homodimer. Fe(2+) serves as cofactor.

It catalyses the reaction GTP + H2O = 7,8-dihydroneopterin 2',3'-cyclic phosphate + formate + diphosphate + H(+). It functions in the pathway cofactor biosynthesis; 5,6,7,8-tetrahydromethanopterin biosynthesis. Functionally, converts GTP to 7,8-dihydro-D-neopterin 2',3'-cyclic phosphate, the first intermediate in the biosynthesis of coenzyme methanopterin. In Methanosarcina acetivorans (strain ATCC 35395 / DSM 2834 / JCM 12185 / C2A), this protein is GTP cyclohydrolase MptA.